Here is a 156-residue protein sequence, read N- to C-terminus: Small ribosomal subunit protein uS7 (156 aa).

This sequence belongs to the universal ribosomal protein uS7 family. Part of the 30S ribosomal subunit. Contacts proteins S9 and S11.

One of the primary rRNA binding proteins, it binds directly to 16S rRNA where it nucleates assembly of the head domain of the 30S subunit. Is located at the subunit interface close to the decoding center, probably blocks exit of the E-site tRNA. This Vibrio cholerae serotype O1 (strain ATCC 39315 / El Tor Inaba N16961) protein is Small ribosomal subunit protein uS7.